We begin with the raw amino-acid sequence, 848 residues long: Phosphatidate phosphatase LPIN3 (848 aa).

The tract at residues 1–108 is N-LIP; sequence MNYVGQLAET…VPPRLCTSPI (108 aa). 3 disordered regions span residues 97 to 233, 271 to 298, and 314 to 373; these read EDVP…SPLR, PEEP…PGVR, and AVDS…NQHL. The short motif at 135–144 is the Nuclear localization signal element; it reads GRRKRRRRRK. The span at 135-146 shows a compositional bias: basic residues; that stretch reads GRRKRRRRRKPR. Residues 151–164 show a composition bias toward acidic residues; it reads DAVDSSSEELEAGA. A phosphoserine mark is found at Ser155 and Ser156. A compositionally biased stretch (low complexity) spans 165–191; that stretch reads ESELTLLEKPTPESPSAQEAEEPSSQP. At Ser218 the chain carries Phosphoserine. Residues 271–282 are compositionally biased toward low complexity; it reads PEEPSPSSSPSE. The span at 342–358 shows a compositional bias: polar residues; sequence KSWSWTTPESHTPSGHP. Ser460 is modified (phosphoserine). The segment covering 536 to 556 has biased composition (basic and acidic residues); it reads EEHSSQREKAATRKQQGEKTE. The interval 536–568 is disordered; it reads EEHSSQREKAATRKQQGEKTEVLSSDDDVPDSP. Residues 587–789 are C-LIP; the sequence is YKKSLRLSSD…RIFTVNPRGE (203 aa). Positions 641 to 645 match the DXDXT motif motif; that stretch reads DIDGT. The short motif at 652–656 is the LXXIL motif element; it reads LGHIL.

Belongs to the lipin family. Mg(2+) serves as cofactor. Significant expression in intestine and other regions of the gastrointestinal tract.

Its subcellular location is the nucleus. It catalyses the reaction a 1,2-diacyl-sn-glycero-3-phosphate + H2O = a 1,2-diacyl-sn-glycerol + phosphate. Its activity is regulated as follows. Inhibited by N-ethylmaleimide. Its function is as follows. Magnesium-dependent phosphatidate phosphatase enzyme which catalyzes the conversion of phosphatidic acid to diacylglycerol during triglyceride, phosphatidylcholine and phosphatidylethanolamine biosynthesis therefore regulates fatty acid metabolism. The polypeptide is Phosphatidate phosphatase LPIN3 (Mus musculus (Mouse)).